A 365-amino-acid polypeptide reads, in one-letter code: Elongation factor Tu (365 aa).

GTP is bound by residues 1 to 7, 62 to 66, and 117 to 120; these read HVDHGKT, DCPGH, and NKCD. Residues 1–185 enclose the tr-type G domain; that stretch reads HVDHGKTTLT…ILDTYIPEPK (185 aa). Position 7 (T7) interacts with Mg(2+).

This sequence belongs to the TRAFAC class translation factor GTPase superfamily. Classic translation factor GTPase family. EF-Tu/EF-1A subfamily. As to quaternary structure, monomer.

It is found in the cytoplasm. It carries out the reaction GTP + H2O = GDP + phosphate + H(+). In terms of biological role, GTP hydrolase that promotes the GTP-dependent binding of aminoacyl-tRNA to the A-site of ribosomes during protein biosynthesis. The protein is Elongation factor Tu of Buchnera aphidicola subsp. Melaphis rhois.